The sequence spans 197 residues: Probable nicotinate-nucleotide adenylyltransferase (197 aa).

It belongs to the NadD family.

It catalyses the reaction nicotinate beta-D-ribonucleotide + ATP + H(+) = deamido-NAD(+) + diphosphate. Its pathway is cofactor biosynthesis; NAD(+) biosynthesis; deamido-NAD(+) from nicotinate D-ribonucleotide: step 1/1. Catalyzes the reversible adenylation of nicotinate mononucleotide (NaMN) to nicotinic acid adenine dinucleotide (NaAD). This is Probable nicotinate-nucleotide adenylyltransferase from Bordetella parapertussis (strain 12822 / ATCC BAA-587 / NCTC 13253).